The sequence spans 647 residues: 1-deoxy-D-xylulose-5-phosphate synthase (647 aa).

Thiamine diphosphate-binding positions include H88 and 129 to 131 (GHA). D160 contacts Mg(2+). Residues 161–162 (GA), N189, Y300, and E377 contribute to the thiamine diphosphate site. N189 serves as a coordination point for Mg(2+).

The protein belongs to the transketolase family. DXPS subfamily. Homodimer. The cofactor is Mg(2+). Thiamine diphosphate is required as a cofactor.

It catalyses the reaction D-glyceraldehyde 3-phosphate + pyruvate + H(+) = 1-deoxy-D-xylulose 5-phosphate + CO2. The protein operates within metabolic intermediate biosynthesis; 1-deoxy-D-xylulose 5-phosphate biosynthesis; 1-deoxy-D-xylulose 5-phosphate from D-glyceraldehyde 3-phosphate and pyruvate: step 1/1. Catalyzes the acyloin condensation reaction between C atoms 2 and 3 of pyruvate and glyceraldehyde 3-phosphate to yield 1-deoxy-D-xylulose-5-phosphate (DXP). The polypeptide is 1-deoxy-D-xylulose-5-phosphate synthase (Dehalococcoides mccartyi (strain CBDB1)).